The following is a 208-amino-acid chain: Thymidylate kinase (208 aa).

10–17 lines the ATP pocket; that stretch reads GIDGSGKT.

It belongs to the thymidylate kinase family.

It catalyses the reaction dTMP + ATP = dTDP + ADP. Its function is as follows. Phosphorylation of dTMP to form dTDP in both de novo and salvage pathways of dTTP synthesis. The protein is Thymidylate kinase of Ligilactobacillus salivarius (strain UCC118) (Lactobacillus salivarius).